The primary structure comprises 42 residues: Photosystem I reaction center subunit IX (42 aa).

Residues 7 to 27 (YLSVAPVLSTLWFGALAGLLI) traverse the membrane as a helical segment.

Belongs to the PsaJ family.

It is found in the plastid. The protein resides in the chloroplast thylakoid membrane. In terms of biological role, may help in the organization of the PsaE and PsaF subunits. This Guizotia abyssinica (Niger) protein is Photosystem I reaction center subunit IX.